Reading from the N-terminus, the 472-residue chain is Threonine synthase-like 2 (472 aa).

Lysine 113 carries the N6-(pyridoxal phosphate)lysine modification.

This sequence belongs to the threonine synthase family. It depends on pyridoxal 5'-phosphate as a cofactor.

In terms of biological role, acts as a catabolic phospho-lyase on both gamma- and beta-phosphorylated substrates. Degrades O-phospho-threonine (PThr) to alpha-ketobutyrate, ammonia and phosphate. The sequence is that of Threonine synthase-like 2 (thnsl2) from Xenopus laevis (African clawed frog).